Consider the following 486-residue polypeptide: Cardiolipin synthase A (486 aa).

2 consecutive transmembrane segments (helical) span residues 3–23 (TFYTVISWLSVFGYWLLIAGV) and 38–58 (MAWLLIIYILPLVGIIAYLSF). PLD phosphodiesterase domains follow at residues 219–246 (MDLRQHRKIVLIDNYVAYTGSMNMVDPR) and 399–426 (EGGLLHSKSVLVDGQLSLVGTVNLDMRS). Residues His224, Lys226, Asp231, His404, Lys406, and Asp411 contribute to the active site.

The protein belongs to the phospholipase D family. Cardiolipin synthase subfamily. ClsA sub-subfamily.

Its subcellular location is the cell inner membrane. The enzyme catalyses 2 a 1,2-diacyl-sn-glycero-3-phospho-(1'-sn-glycerol) = a cardiolipin + glycerol. Functionally, catalyzes the reversible phosphatidyl group transfer from one phosphatidylglycerol molecule to another to form cardiolipin (CL) (diphosphatidylglycerol) and glycerol. The chain is Cardiolipin synthase A from Yersinia pseudotuberculosis serotype IB (strain PB1/+).